The chain runs to 763 residues: Leucine-rich repeat and WD repeat-containing protein 1 (763 aa).

LRR repeat units lie at residues 22-43 (QIKT…VPLL), 48-69 (RLEK…LRLP), 70-91 (CLKI…EALT), and 92-113 (NLEE…HKVI). The disordered stretch occupies residues 206–372 (LTSSEEEERV…KTTKAKLQVP (167 aa)). Serine 270 carries the post-translational modification Phosphoserine. The segment covering 277–288 (VLNTPQKTQPVV) has biased composition (polar residues). Position 280 is a phosphothreonine (threonine 280). Serine 290 is subject to Phosphoserine. Residues 313-325 (LENVTQKAASQTE) are compositionally biased toward polar residues. WD repeat units follow at residues 499–539 (VSRR…QDYN), 608–647 (NNYR…ASWN), 653–704 (VPAV…MENF), and 729–763 (LEGP…RESH).

The protein belongs to the LRWD1 family. Component of the ORC complex.

It localises to the nucleus. Its subcellular location is the chromosome. The protein localises to the centromere. It is found in the telomere. The protein resides in the cytoplasm. It localises to the cytoskeleton. Its subcellular location is the microtubule organizing center. The protein localises to the centrosome. It is found in the kinetochore. Required for G1/S transition. Recruits and stabilizes the origin recognition complex (ORC) onto chromatin during G1 to establish pre-replication complex (preRC) and to heterochromatic sites in post-replicated cells. Binds a combination of DNA and histone methylation repressive marks on heterochromatin. Required for silencing of major satellite repeats. May be important ORC2, ORC3 and ORC4 stability. The sequence is that of Leucine-rich repeat and WD repeat-containing protein 1 (lrwd1) from Danio rerio (Zebrafish).